Here is a 142-residue protein sequence, read N- to C-terminus: Large ribosomal subunit protein uL11 (142 aa).

The protein belongs to the universal ribosomal protein uL11 family. As to quaternary structure, part of the ribosomal stalk of the 50S ribosomal subunit. Interacts with L10 and the large rRNA to form the base of the stalk. L10 forms an elongated spine to which L12 dimers bind in a sequential fashion forming a multimeric L10(L12)X complex. Post-translationally, one or more lysine residues are methylated.

Its function is as follows. Forms part of the ribosomal stalk which helps the ribosome interact with GTP-bound translation factors. In Hydrogenovibrio crunogenus (strain DSM 25203 / XCL-2) (Thiomicrospira crunogena), this protein is Large ribosomal subunit protein uL11.